An 82-amino-acid polypeptide reads, in one-letter code: Small ribosomal subunit protein bS16 (82 aa).

This sequence belongs to the bacterial ribosomal protein bS16 family.

The polypeptide is Small ribosomal subunit protein bS16 (Yersinia enterocolitica serotype O:8 / biotype 1B (strain NCTC 13174 / 8081)).